An 869-amino-acid polypeptide reads, in one-letter code: Valine--tRNA ligase (869 aa).

The 'HIGH' region signature appears at 47–57 (PYPTGNFHIGN). The 'KMSKS' region signature appears at 521 to 525 (KMSKS). Lysine 524 contributes to the ATP binding site.

The protein belongs to the class-I aminoacyl-tRNA synthetase family. ValS type 2 subfamily.

The protein localises to the cytoplasm. The catalysed reaction is tRNA(Val) + L-valine + ATP = L-valyl-tRNA(Val) + AMP + diphosphate. Functionally, catalyzes the attachment of valine to tRNA(Val). As ValRS can inadvertently accommodate and process structurally similar amino acids such as threonine, to avoid such errors, it has a 'posttransfer' editing activity that hydrolyzes mischarged Thr-tRNA(Val) in a tRNA-dependent manner. The chain is Valine--tRNA ligase from Methanosarcina mazei (strain ATCC BAA-159 / DSM 3647 / Goe1 / Go1 / JCM 11833 / OCM 88) (Methanosarcina frisia).